A 731-amino-acid chain; its full sequence is EF-hand calcium-binding domain-containing protein 4B (731 aa).

Residues 1–45 (MAAPDGRVVSRPQRLGQGSGQGPKGSGACLHPLDSLEQKETQEQT) are disordered. Positions 84–119 (LSLEELEDVFDALDADGNGYLTPQEFTTGFSHFFFS) constitute an EF-hand domain. 5 residues coordinate Ca(2+): D97, D99, N101, Y103, and E108. The stretch at 201–382 (LTRIISQLQE…RERNKHLRDE (182 aa)) forms a coiled coil. The proline-rich domain (PRD) which mediates interaction with VAV1 stretch occupies residues 349 to 540 (MEVYRVTESL…ALCKEESSPS (192 aa)). Disordered stretches follow at residues 426-466 (SEEE…PYPR) and 494-528 (CSEEEEVSDQGVQGQIPEAPPLKLTPTSPRGQPVG). GTP-binding residues include S554, V556, G557, K558, T559, S560, S571, P572, and T577. Residue T559 coordinates Mg(2+). The segment at 572-580 (PGMAATVGI) is switch-I. 2 residues coordinate Mg(2+): T577 and D600. Residues G603, N658, K659, D661, and A689 each coordinate GTP. Residues 603–619 (GQERYRCITQQFFRKAD) form a switch-II region. Residue C729 is the site of S-geranylgeranyl cysteine attachment.

This sequence belongs to the EFCAB4 family. Interacts with ORAI1 and STIM1; the interaction is direct and takes place in absence of Ca(2+). Forms a complex with ORAI1 and STIM1 at low concentration of Ca(2+), the complex dissociates at elevated Ca(2+) concentrations. Interacts with ORAI2 and ORAI3. As to quaternary structure, interacts with DYNC1H1. Interacts with the dynein-dynactin complex in a Ca(2+)-dependent manner. Interacts with VAV1. The cofactor is Mg(2+). Expressed in the Jurkat T-cell line. In terms of tissue distribution, expressed in endothelial cells. Expressed in Weibel-Palade bodies (which are P-selectin/SELP negative) in endothelial cells. Expressed in the Jurkat T-cell line.

The protein resides in the cytoplasm. The protein localises to the cytoskeleton. It localises to the microtubule organizing center. Its subcellular location is the cell membrane. It is found in the golgi apparatus membrane. The protein resides in the golgi apparatus. The protein localises to the trans-Golgi network membrane. It localises to the vesicle. It carries out the reaction GTP + H2O = GDP + phosphate + H(+). Its function is as follows. Ca(2+)-binding protein that plays a key role in store-operated Ca(2+) entry (SOCE) in T-cells by regulating CRAC channel activation. Acts as a cytoplasmic calcium-sensor that facilitates the clustering of ORAI1 and STIM1 at the junctional regions between the plasma membrane and the endoplasmic reticulum upon low Ca(2+) concentration. It thereby regulates CRAC channel activation, including translocation and clustering of ORAI1 and STIM1. Upon increase of cytoplasmic Ca(2+) resulting from opening of CRAC channels, dissociates from ORAI1 and STIM1, thereby destabilizing the ORAI1-STIM1 complex. In terms of biological role, rab GTPase that mediates the trafficking of Weibel-Palade bodies (WPBs) to microtubule organizing center (MTOC) in endothelial cells in response to acute inflammatory stimuli. During histamine (but not thrombin) stimulation of endothelial cells, the dynein-bound form induces retrograde transport of a subset of WPBs along microtubules to the MTOC in a Ca(2+)-independent manner and its GTPase activity is essential for this function. Ca(2+)-regulated dynein adapter protein that activates dynein-mediated transport and dynein-dynactin motility on microtubules and regulates endosomal trafficking of CD47. Acts as an intracellular signaling module bridging two important T-cell receptor (TCR) signaling pathways, Ca(2+)-NFAT and JNK, to affect T-cell activation. In resting T-cells, is predominantly localized near TGN network in a GTP-bound form, upon TCR stimulation, localizes at the immunological synapse via interaction with VAV1 to activate downstream Ca(2+)-NFAT and JNK signaling pathways. Plays a role in T-helper 1 (Th1) cell differentiation and T-helper 17 (Th17) cell effector function. Plays a role in store-operated Ca(2+) entry (SOCE) in T-cells by regulating CRAC channel activation. This is EF-hand calcium-binding domain-containing protein 4B from Homo sapiens (Human).